We begin with the raw amino-acid sequence, 125 residues long: Period circadian protein (125 aa).

Residues 1–125 (EGSGGSGSSG…VTLTESLLNK (125 aa)) are disordered. 3 tandem repeats follow at residues 30–31 (GT), 33–34 (GT), and 35–36 (GT). The span at 30-84 (GTGGTGTNTGTNTGTGTGTGTGTGTGTGTGTGTGTGTGTGTGTGTGTGKGAGAGT) shows a compositional bias: gly residues. Residues 30-86 (GTGGTGTNTGTNTGTGTGTGTGTGTGTGTGTGTGTGTGTGTGTGTGTGKGAGAGTGT) are 28 X 2 AA approximate tandem repeats of G-[TA]. Residues 37–38 (NT) form a 4; approximate repeat. The stretch at 39–40 (GT) is repeat 5. One copy of the 6; approximate repeat lies at 41-42 (NT). A run of 17 repeats spans residues 43–44 (GT), 45–46 (GT), 47–48 (GT), 49–50 (GT), 51–52 (GT), 53–54 (GT), 55–56 (GT), 57–58 (GT), 59–60 (GT), 61–62 (GT), 63–64 (GT), 65–66 (GT), 67–68 (GT), 69–70 (GT), 71–72 (GT), 73–74 (GT), and 75–76 (GT). One copy of the 24; approximate repeat lies at 77-78 (GK). 4 tandem repeats follow at residues 79–80 (GA), 81–82 (GA), 83–84 (GT), and 85–86 (GT). Residues 85–112 (GTATNETAGPGTTTTTTTRSTTTAATAA) are compositionally biased toward low complexity. A compositionally biased stretch (polar residues) spans 116–125 (VTLTESLLNK).

In terms of assembly, forms a heterodimer with timeless (TIM); the complex then translocates into the nucleus. In terms of processing, phosphorylated with a circadian rhythmicity, probably by the double-time protein (dbt). Phosphorylation could be implicated in the stability of per monomer and in the formation of heterodimer per-tim.

It localises to the nucleus. The protein resides in the cytoplasm. It is found in the perinuclear region. Its function is as follows. Essential for biological clock functions. Determines the period length of circadian and ultradian rhythms; an increase in PER dosage leads to shortened circadian rhythms and a decrease leads to lengthened circadian rhythms. Essential for the circadian rhythmicity of locomotor activity, eclosion behavior, and for the rhythmic component of the male courtship song that originates in the thoracic nervous system. The biological cycle depends on the rhythmic formation and nuclear localization of the TIM-PER complex. Light induces the degradation of TIM, which promotes elimination of PER. Nuclear activity of the heterodimer coordinatively regulates PER and TIM transcription through a negative feedback loop. Behaves as a negative element in circadian transcriptional loop. Does not appear to bind DNA, suggesting indirect transcriptional inhibition. The protein is Period circadian protein (per) of Drosophila ananassae (Fruit fly).